Consider the following 655-residue polypeptide: p-hydroxybenzoic acid efflux pump subunit AaeB (655 aa).

10 consecutive transmembrane segments (helical) span residues 13–33, 38–58, 69–89, 93–113, 121–141, 152–172, 370–390, 407–427, 431–451, and 481–501; these read FAVK…HFQL, WAVL…GGEP, LRII…IAMI, LLMI…SSLV, WGLA…EPLL, EIVV…PRSI, LFWL…IAVV, FIYG…VIIP, QSML…GIEV, and LFLD…TVIL.

This sequence belongs to the aromatic acid exporter ArAE (TC 2.A.85) family.

It localises to the cell inner membrane. In terms of biological role, forms an efflux pump with AaeA. Could function as a metabolic relief valve, allowing to eliminate certain compounds when they accumulate to high levels in the cell. The protein is p-hydroxybenzoic acid efflux pump subunit AaeB of Escherichia fergusonii (strain ATCC 35469 / DSM 13698 / CCUG 18766 / IAM 14443 / JCM 21226 / LMG 7866 / NBRC 102419 / NCTC 12128 / CDC 0568-73).